We begin with the raw amino-acid sequence, 731 residues long: Vezatin (731 aa).

Transmembrane regions (helical) follow at residues 91 to 111 and 114 to 134; these read LATPNIWDLSMLFAFISLLVM and TWWIVSSWLVWGVILFVYLVI. The stretch at 382 to 414 forms a coiled coil; sequence VRSLQLHLKALLNEVIILEDELEKLVCTKETQE. Disordered regions lie at residues 570-671 and 710-731; these read PVDP…DSLQ and QTFGDEEEEQIIEENKNKIEEK. Residues 577-586 show a composition bias toward polar residues; the sequence is ISNSEPSMNS. Residues 590 to 601 show a composition bias toward basic and acidic residues; the sequence is KVSKNDTEEESS. Residues 658-671 are compositionally biased toward polar residues; the sequence is GLTTAPPTPRDSLQ. Residues 712 to 721 show a composition bias toward acidic residues; sequence FGDEEEEQII. Residues 722–731 are compositionally biased toward basic and acidic residues; the sequence is EENKNKIEEK.

Belongs to the vezatin family. Interacts with USH2A (via the cytoplasmic region); the interaction associates VEZT with the USH2 complex at the stereocilia base. Interacts with myosin MYO7A and the cadherin-catenins complex.

The protein resides in the cell membrane. The protein localises to the cell projection. It is found in the stereocilium membrane. Its subcellular location is the cell junction. It localises to the adherens junction. The protein resides in the nucleus. The protein localises to the cytoplasmic vesicle. It is found in the secretory vesicle. Its subcellular location is the acrosome. Plays a pivotal role in the establishment of adherens junctions and their maintenance in adult life. Required for morphogenesis of the preimplantation embryo, and for the implantation process. This Pongo abelii (Sumatran orangutan) protein is Vezatin (VEZT).